Consider the following 471-residue polypeptide: Putative pentatricopeptide repeat-containing protein At1g53330 (471 aa).

PPR repeat units lie at residues 46–81, 82–116, 117–147, 151–185, 186–221, 222–256, 257–291, 292–326, 327–361, and 362–396; these read SLLC…RIVP, TEII…RCQR, TVKS…IDEF, DACT…KVKP, TGVT…GVRP, TVHI…KIKV, DAAI…GCKP, DTVT…GLKP, DVIS…GCSP, and DTLS…GYKP.

It belongs to the PPR family. P subfamily.

In terms of biological role, involved during embryo development. The protein is Putative pentatricopeptide repeat-containing protein At1g53330 of Arabidopsis thaliana (Mouse-ear cress).